The primary structure comprises 94 residues: Neutrophil defensin 6 (94 aa).

An N-terminal signal peptide occupies residues 1-19; that stretch reads MRTIAILAAILLFALLAQA. Residues 20 to 61 constitute a propeptide that is removed on maturation; it reads KSLQETADEAATQEQPGEDDQDLAVSFEENGLSTLRASGSQA. Intrachain disulfides connect Cys-65–Cys-93, Cys-67–Cys-82, and Cys-72–Cys-92.

The protein belongs to the alpha-defensin family.

Its subcellular location is the secreted. Its function is as follows. Defensins 6 and 7 have bacteriostatic activity against Gram-positive bacteria S.aureus and L.monocytogenes and Gram-negative bacterium E.coli and antifungal activity against C.neoformans. Defensin 7 has microbicidial activity against Gram-positive bacteria S.aureus and L.monocytogenes. This is Neutrophil defensin 6 from Macaca mulatta (Rhesus macaque).